Consider the following 613-residue polypeptide: UvrABC system protein C (613 aa).

The GIY-YIG domain occupies aspartate 13 to isoleucine 92. One can recognise a UVR domain in the interval aspartate 204–leucine 239.

The protein belongs to the UvrC family. In terms of assembly, interacts with UvrB in an incision complex.

It is found in the cytoplasm. Its function is as follows. The UvrABC repair system catalyzes the recognition and processing of DNA lesions. UvrC both incises the 5' and 3' sides of the lesion. The N-terminal half is responsible for the 3' incision and the C-terminal half is responsible for the 5' incision. The polypeptide is UvrABC system protein C (Ruminiclostridium cellulolyticum (strain ATCC 35319 / DSM 5812 / JCM 6584 / H10) (Clostridium cellulolyticum)).